A 219-amino-acid polypeptide reads, in one-letter code: UPF0173 metal-dependent hydrolase Mlab_1154 (219 aa).

This sequence belongs to the UPF0173 family.

This chain is UPF0173 metal-dependent hydrolase Mlab_1154, found in Methanocorpusculum labreanum (strain ATCC 43576 / DSM 4855 / Z).